The following is a 402-amino-acid chain: Phosphoglycerate kinase (402 aa).

Substrate is bound by residues Asp-24 to Asn-26, Arg-40, His-63 to Arg-66, Arg-122, and Arg-155. Residues Lys-206, Gly-297, Glu-328, and Gly-357–Ser-360 contribute to the ATP site.

It belongs to the phosphoglycerate kinase family. In terms of assembly, monomer.

Its subcellular location is the cytoplasm. The catalysed reaction is (2R)-3-phosphoglycerate + ATP = (2R)-3-phospho-glyceroyl phosphate + ADP. Its pathway is carbohydrate degradation; glycolysis; pyruvate from D-glyceraldehyde 3-phosphate: step 2/5. This is Phosphoglycerate kinase from Synechococcus sp. (strain RCC307).